A 391-amino-acid polypeptide reads, in one-letter code: 1-deoxy-D-xylulose 5-phosphate reductoisomerase (391 aa).

Asparagine 109 contacts NADPH. Lysine 110 contacts 1-deoxy-D-xylulose 5-phosphate. Residue glutamate 111 participates in NADPH binding. Position 135 (aspartate 135) interacts with Mn(2+). Residues serine 136, glutamate 137, serine 171, and histidine 194 each coordinate 1-deoxy-D-xylulose 5-phosphate. Mn(2+) is bound at residue glutamate 137. Glycine 200 is a binding site for NADPH. Positions 207, 212, 213, and 216 each coordinate 1-deoxy-D-xylulose 5-phosphate. Residue glutamate 216 coordinates Mn(2+).

Belongs to the DXR family. As to quaternary structure, homodimer. Requires Mg(2+) as cofactor. It depends on Mn(2+) as a cofactor.

The catalysed reaction is 2-C-methyl-D-erythritol 4-phosphate + NADP(+) = 1-deoxy-D-xylulose 5-phosphate + NADPH + H(+). The protein operates within isoprenoid biosynthesis; isopentenyl diphosphate biosynthesis via DXP pathway; isopentenyl diphosphate from 1-deoxy-D-xylulose 5-phosphate: step 1/6. Catalyzes the NADPH-dependent rearrangement and reduction of 1-deoxy-D-xylulose-5-phosphate (DXP) to 2-C-methyl-D-erythritol 4-phosphate (MEP). This Blochmanniella floridana protein is 1-deoxy-D-xylulose 5-phosphate reductoisomerase.